Consider the following 460-residue polypeptide: Cysteine--tRNA ligase (460 aa).

Cys29 provides a ligand contact to Zn(2+). Positions 31–41 (ATPQSSPHIGH) match the 'HIGH' region motif. Zn(2+)-binding residues include Cys212, His237, and Glu241. The short motif at 268–272 (KMSKS) is the 'KMSKS' region element. Residue Lys271 participates in ATP binding.

Belongs to the class-I aminoacyl-tRNA synthetase family. In terms of assembly, monomer. Zn(2+) serves as cofactor.

The protein resides in the cytoplasm. It catalyses the reaction tRNA(Cys) + L-cysteine + ATP = L-cysteinyl-tRNA(Cys) + AMP + diphosphate. This is Cysteine--tRNA ligase from Corynebacterium glutamicum (strain ATCC 13032 / DSM 20300 / JCM 1318 / BCRC 11384 / CCUG 27702 / LMG 3730 / NBRC 12168 / NCIMB 10025 / NRRL B-2784 / 534).